The sequence spans 157 residues: Protein E6 (157 aa).

2 zinc fingers span residues Cys41–Cys77 and Cys114–Cys150.

Belongs to the papillomaviridae E6 protein family. As to quaternary structure, forms homodimers. Interacts with ubiquitin-protein ligase UBE3A/E6-AP; this interaction stimulates UBE3A ubiquitin activity. Interacts with host BAK1.

The protein localises to the host cytoplasm. It localises to the host nucleus. Plays a major role in the induction and maintenance of cellular transformation. E6 associates with host UBE3A/E6-AP ubiquitin-protein ligase and modulates its activity. Protects host keratinocytes from apoptosis by mediating the degradation of host BAK1. May also inhibit host immune response. The protein is Protein E6 of Human papillomavirus 36.